A 306-amino-acid chain; its full sequence is MGARLGRRARADAPAAPSAGPAPYERRVRWLREIQSTLRERRPERARQLLRLLRQDLGLEGNLLTDILHRNVTFLNLVDPISHDLLVNLARDLQCPKKDHELWKSSDKICRQLIYHLTPHSKRKHHRKTQSSLKSSLQKTLLVGETVDLSGIPLSARDVQHISRYLDTRGVELVVLDLSFTELSDELLHLLLPSLWALPRLTQLLLNGNRLTRAAARELTEAIKDTAKFPVLAWVDLGNNVDVSSLPQPLLVGLRRRLSQHTSLPTIYEGLDLEPGGGMAETTAAVSTWGSAATEAGPEPQGCCAR.

Residues Met1–Ala22 are disordered. The span at Asp12–Ala22 shows a compositional bias: low complexity. LRR repeat units follow at residues Leu173 to Glu186 and Leu198 to Leu211.

The protein belongs to the LRRC75 family.

In terms of biological role, may suppress myogenic differentiation by modulating MYOG expression and Erk1/2 signaling. In Mus musculus (Mouse), this protein is Leucine-rich repeat-containing protein 75B.